Reading from the N-terminus, the 85-residue chain is CRISPR-associated endoribonuclease Cas2 (85 aa).

Asp-8 is a Mg(2+) binding site.

The protein belongs to the CRISPR-associated endoribonuclease Cas2 protein family. In terms of assembly, homodimer, forms a heterotetramer with a Cas1 homodimer. The cofactor is Mg(2+).

Functionally, CRISPR (clustered regularly interspaced short palindromic repeat), is an adaptive immune system that provides protection against mobile genetic elements (viruses, transposable elements and conjugative plasmids). CRISPR clusters contain sequences complementary to antecedent mobile elements and target invading nucleic acids. CRISPR clusters are transcribed and processed into CRISPR RNA (crRNA). Functions as a ssRNA-specific endoribonuclease. Involved in the integration of spacer DNA into the CRISPR cassette. The sequence is that of CRISPR-associated endoribonuclease Cas2 from Pyrococcus furiosus (strain ATCC 43587 / DSM 3638 / JCM 8422 / Vc1).